Reading from the N-terminus, the 323-residue chain is Methenyltetrahydromethanopterin cyclohydrolase (323 aa).

Belongs to the MCH family.

The protein resides in the cytoplasm. It catalyses the reaction 5,10-methenyl-5,6,7,8-tetrahydromethanopterin + H2O = N(5)-formyl-5,6,7,8-tetrahydromethanopterin + H(+). It participates in one-carbon metabolism; methanogenesis from CO(2); 5,10-methenyl-5,6,7,8-tetrahydromethanopterin from CO(2): step 3/3. Its function is as follows. Catalyzes the reversible interconversion of 5-formyl-H(4)MPT to methenyl-H(4)MPT(+). In Methanococcus vannielii (strain ATCC 35089 / DSM 1224 / JCM 13029 / OCM 148 / SB), this protein is Methenyltetrahydromethanopterin cyclohydrolase.